We begin with the raw amino-acid sequence, 102 residues long: Small ribosomal subunit protein uS10 (102 aa).

The protein belongs to the universal ribosomal protein uS10 family. Part of the 30S ribosomal subunit.

Involved in the binding of tRNA to the ribosomes. The protein is Small ribosomal subunit protein uS10 of Rhizobium meliloti (strain 1021) (Ensifer meliloti).